An 811-amino-acid polypeptide reads, in one-letter code: G-type lectin S-receptor-like serine/threonine-protein kinase LECRK2 (811 aa).

Residues 1–23 (MAPILFLPILQILLIYCTKSAQA) form the signal peptide. Positions 24 to 153 (QLNISIGSSL…DGATKWESFG (130 aa)) constitute a Bulb-type lectin domain. Over 24-464 (QLNISIGSSL…DKKYWILGSS (441 aa)) the chain is Extracellular. N-linked (GlcNAc...) asparagine glycosylation is found at N26, N39, N59, N219, N226, N237, and N242. The EGF-like; atypical domain occupies 292 to 344 (PENICQTIQTKVGSGACGFNSYCTFDGTKNTTNCLCPQRYKFFDNERTYKGCR). 5 disulfides stabilise this stretch: C296/C314, C308/C325, C327/C343, C389/C411, and C393/C399. N321 carries an N-linked (GlcNAc...) asparagine glycan. Positions 352–436 (CDLDETAAMV…LQATVLLKVP (85 aa)) constitute a PAN domain. A helical membrane pass occupies residues 465-485 (LFFGSSVLVNFLLIFVLLFGT). Over 486–811 (YCSITSRKKT…DPSSYISSLA (326 aa)) the chain is Cytoplasmic. A Protein kinase domain is found at 521–795 (GGFHEVLGTG…KVMQMLDGAV (275 aa)). ATP-binding positions include 527-535 (LGTGASGIV) and K551. The active-site Proton acceptor is the D645.

It belongs to the protein kinase superfamily. Ser/Thr protein kinase family.

Its subcellular location is the membrane. The enzyme catalyses L-seryl-[protein] + ATP = O-phospho-L-seryl-[protein] + ADP + H(+). It carries out the reaction L-threonyl-[protein] + ATP = O-phospho-L-threonyl-[protein] + ADP + H(+). Its function is as follows. Involved in resistance against the herbivorous insect brown planthopper (N.lugens, BPH). Member of the BPH3 (BPH resistance locus 3) cluster which contains LECRK1, LECRK2 and LECRK3. This chain is G-type lectin S-receptor-like serine/threonine-protein kinase LECRK2, found in Oryza sativa subsp. indica (Rice).